The primary structure comprises 973 residues: NLR family member X1 (973 aa).

Residues 1–84 (MRWGCHLPRT…EAIQRHRRNL (84 aa)) constitute a mitochondrion transit peptide. Positions 73–554 (ATEAIQRHRR…RILPLLFNLL (482 aa)) are required for interaction with MAVS. One can recognise an NACHT domain in the interval 158–481 (QTVVLYGTVG…LRFFLAPCVE (324 aa)). Residue 164 to 171 (GTVGTGKS) coordinates ATP. Positions 554–972 (LKVVPRVFGR…TLLEQLGGSG (419 aa)) are required for the repression of MAVS-induced interferon signaling. Residues 665 to 692 (RQVLPPSELLDHLFFHYEFQNQRFSAEV) form the LRRNT domain. LRR repeat units lie at residues 693–716 (LGSL…VVAS), 722–745 (RHPL…TLMP), 747–775 (LLRA…LLHD), 776–799 (QCQI…VLMD), 809–832 (HLSL…LDRN), 833–855 (KQLQ…ALAK), 856–875 (AARK…ELSS), and 876–897 (EGRQ…VVAS). In terms of domain architecture, LRRCT spans 904–968 (VSEYWSVILS…SEVKTLLEQL (65 aa)).

The protein belongs to the NLRP family. Homohexamer. Interacts with MAVS. Interacts with TUFM.

The protein localises to the mitochondrion outer membrane. Its function is as follows. Participates in antiviral signaling. Acts as a negative regulator of MAVS-mediated antiviral responses, through the inhibition of the virus-induced RLH (RIG-like helicase)-MAVS interaction. Instead, promotes autophagy by interacting with TUFM and subsequently recruiting the autophagy-related proteins ATG5 and ATG12. Also regulates MAVS-dependent NLRP3 inflammasome activation to attenuate apoptosis. Has no inhibitory function on NF-kappa-B signaling pathway, but enhances NF-kappa-B and JUN N-terminal kinase dependent signaling through the production of reactive oxygen species. Regulates viral mediated-inflammation and energy metabolism in a sex-dependent manner. In females, prevents uncontrolled inflammation and energy metabolism and thus, may contribute to the sex differences observed in infectious and inflammatory diseases. This chain is NLR family member X1 (Nlrx1), found in Rattus norvegicus (Rat).